The following is a 317-amino-acid chain: Ribose-phosphate pyrophosphokinase (317 aa).

Residues 43 to 45 and 102 to 103 contribute to the ATP site; these read DGE and RQ. Lysine 106 and arginine 110 together coordinate ADP. Histidine 136 lines the Mg(2+) pocket. ADP is bound by residues glutamine 141 and 149-150; that span reads DH. A Mg(2+)-binding site is contributed by aspartate 175. Lysine 198 is an active-site residue. D-ribose 5-phosphate is bound by residues arginine 200, aspartate 224, and 228–232; that span reads DTAGT. 311-313 lines the ADP pocket; that stretch reads SVS.

It belongs to the ribose-phosphate pyrophosphokinase family. Class I subfamily. As to quaternary structure, homohexamer; trimer of dimers. Requires Mg(2+) as cofactor.

Its subcellular location is the cytoplasm. It catalyses the reaction D-ribose 5-phosphate + ATP = 5-phospho-alpha-D-ribose 1-diphosphate + AMP + H(+). It participates in metabolic intermediate biosynthesis; 5-phospho-alpha-D-ribose 1-diphosphate biosynthesis; 5-phospho-alpha-D-ribose 1-diphosphate from D-ribose 5-phosphate (route I): step 1/1. Its activity is regulated as follows. Activated by inorganic phosphate, and to a lesser extent by sulfate ions. In addition to form a complex with ATP, Mg(2+) also acts as a cofactor. Strongly inhibited by ADP through competitive binding at the activation site and at a specific allosteric site. Less strongly inhibited by alpha,beta-methylene ATP (mADP), AMP, GDP, GMP and UTP. In terms of biological role, involved in the biosynthesis of the central metabolite phospho-alpha-D-ribosyl-1-pyrophosphate (PRPP) via the transfer of pyrophosphoryl group from ATP to 1-hydroxyl of ribose-5-phosphate (Rib-5-P). This Bacillus subtilis (strain 168) protein is Ribose-phosphate pyrophosphokinase.